The primary structure comprises 103 residues: N(4)-acetylcytidine amidohydrolase (103 aa).

Residues 6-100 enclose the ASCH domain; that stretch reads ITFFQRFQND…NQMQFYVIDF (95 aa). Lysine 21 serves as the catalytic Proton acceptor. Threonine 24 acts as the Nucleophile in catalysis. Catalysis depends on glutamate 74, which acts as the Proton donor.

Belongs to the N(4)-acetylcytidine amidohydrolase family.

It catalyses the reaction N(4)-acetylcytidine + H2O = cytidine + acetate + H(+). The enzyme catalyses N(4)-acetyl-2'-deoxycytidine + H2O = 2'-deoxycytidine + acetate + H(+). The catalysed reaction is N(4)-acetylcytosine + H2O = cytosine + acetate + H(+). Catalyzes the hydrolysis of N(4)-acetylcytidine (ac4C). The polypeptide is N(4)-acetylcytidine amidohydrolase (yqfB) (Salmonella arizonae (strain ATCC BAA-731 / CDC346-86 / RSK2980)).